Here is a 321-residue protein sequence, read N- to C-terminus: Glucan 1,3-beta-glucosidase (321 aa).

A signal peptide spans 1–21; it reads MQFLSSFVFAALALLPLSAMA. 2 N-linked (GlcNAc...) asparagine glycosylation sites follow: Asn39 and Asn99. Catalysis depends on Glu141, which acts as the Proton donor. Residues Asn210, Asn213, and Asn237 are each glycosylated (N-linked (GlcNAc...) asparagine). Glu244 serves as the catalytic Nucleophile. Residues Asn309 and Asn317 are each glycosylated (N-linked (GlcNAc...) asparagine).

This sequence belongs to the glycosyl hydrolase 17 family.

It is found in the secreted. It localises to the cell wall. It catalyses the reaction Successive hydrolysis of beta-D-glucose units from the non-reducing ends of (1-&gt;3)-beta-D-glucans, releasing alpha-glucose.. In terms of biological role, glucanases possibly play a role in cell expansion during growth, in cell-cell fusion during mating, and in spore release during sporulation. This enzyme may be involved in beta-glucan degradation and also function biosynthetically as a transglycosylase. In Schizosaccharomyces pombe (strain 972 / ATCC 24843) (Fission yeast), this protein is Glucan 1,3-beta-glucosidase (bgl2).